We begin with the raw amino-acid sequence, 306 residues long: Cysteine synthase (306 aa).

Position 46 is an N6-(pyridoxal phosphate)lysine (Lys46). Pyridoxal 5'-phosphate-binding positions include Asn76, 180–184, and Ser267; that span reads GSGGT.

Belongs to the cysteine synthase/cystathionine beta-synthase family. As to quaternary structure, homodimer. It depends on pyridoxal 5'-phosphate as a cofactor.

It carries out the reaction O-acetyl-L-serine + hydrogen sulfide = L-cysteine + acetate. Its pathway is amino-acid biosynthesis; L-cysteine biosynthesis; L-cysteine from L-serine: step 2/2. In Helicobacter pylori (strain ATCC 700392 / 26695) (Campylobacter pylori), this protein is Cysteine synthase (cysM).